Consider the following 113-residue polypeptide: Molt-inhibiting hormone (113 aa).

Residues 1–35 (MMSLAHSKFSCQRTRLLAVVLLAALWSSSLQQAAA) form the signal peptide. Disulfide bonds link cysteine 42–cysteine 79, cysteine 59–cysteine 75, and cysteine 62–cysteine 88.

Belongs to the arthropod CHH/MIH/GIH/VIH hormone family.

The protein localises to the secreted. In terms of biological role, inhibits Y-organs where molting hormone (ecdysteroid) is secreted. A molting cycle is initiated when MIH secretion diminishes or stops. This Callinectes sapidus (Blue crab) protein is Molt-inhibiting hormone.